Here is a 338-residue protein sequence, read N- to C-terminus: Large ribosomal subunit protein uL10 (338 aa).

The interval 302–338 (IAAQPQPAEEAEEKVEEEEEEEKEEEEALAGLGALFG) is disordered. Residues 310-329 (EEAEEKVEEEEEEEKEEEEA) are compositionally biased toward acidic residues.

This sequence belongs to the universal ribosomal protein uL10 family. Part of the 50S ribosomal subunit. Forms part of the ribosomal stalk which helps the ribosome interact with GTP-bound translation factors. Forms a heptameric L10(L12)2(L12)2(L12)2 complex, where L10 forms an elongated spine to which the L12 dimers bind in a sequential fashion.

Its function is as follows. Forms part of the ribosomal stalk, playing a central role in the interaction of the ribosome with GTP-bound translation factors. This is Large ribosomal subunit protein uL10 from Thermococcus sibiricus (strain DSM 12597 / MM 739).